We begin with the raw amino-acid sequence, 206 residues long: Thiamine-phosphate synthase (206 aa).

Residues 39–43 (QYREK) and Asn-74 each bind 4-amino-2-methyl-5-(diphosphooxymethyl)pyrimidine. 2 residues coordinate Mg(2+): Asp-75 and Asp-94. Ser-112 is a 4-amino-2-methyl-5-(diphosphooxymethyl)pyrimidine binding site. Residue 138–140 (TNT) participates in 2-[(2R,5Z)-2-carboxy-4-methylthiazol-5(2H)-ylidene]ethyl phosphate binding. Lys-141 contacts 4-amino-2-methyl-5-(diphosphooxymethyl)pyrimidine. Residues Gly-170 and 190–191 (IS) contribute to the 2-[(2R,5Z)-2-carboxy-4-methylthiazol-5(2H)-ylidene]ethyl phosphate site.

Belongs to the thiamine-phosphate synthase family. Requires Mg(2+) as cofactor.

It carries out the reaction 2-[(2R,5Z)-2-carboxy-4-methylthiazol-5(2H)-ylidene]ethyl phosphate + 4-amino-2-methyl-5-(diphosphooxymethyl)pyrimidine + 2 H(+) = thiamine phosphate + CO2 + diphosphate. The catalysed reaction is 2-(2-carboxy-4-methylthiazol-5-yl)ethyl phosphate + 4-amino-2-methyl-5-(diphosphooxymethyl)pyrimidine + 2 H(+) = thiamine phosphate + CO2 + diphosphate. It catalyses the reaction 4-methyl-5-(2-phosphooxyethyl)-thiazole + 4-amino-2-methyl-5-(diphosphooxymethyl)pyrimidine + H(+) = thiamine phosphate + diphosphate. It participates in cofactor biosynthesis; thiamine diphosphate biosynthesis; thiamine phosphate from 4-amino-2-methyl-5-diphosphomethylpyrimidine and 4-methyl-5-(2-phosphoethyl)-thiazole: step 1/1. Condenses 4-methyl-5-(beta-hydroxyethyl)thiazole monophosphate (THZ-P) and 2-methyl-4-amino-5-hydroxymethyl pyrimidine pyrophosphate (HMP-PP) to form thiamine monophosphate (TMP). This chain is Thiamine-phosphate synthase, found in Oceanobacillus iheyensis (strain DSM 14371 / CIP 107618 / JCM 11309 / KCTC 3954 / HTE831).